The primary structure comprises 1828 residues: Separin (1828 aa).

One can recognise a Peptidase C50 domain in the interval 1647-1741; the sequence is KEAGSYILNP…SGALYECGSF (95 aa). Cys1730 is a catalytic residue.

Interacts with cut2. Interacts with rad21.

The protein resides in the cytoplasm. It localises to the nucleus. The enzyme catalyses All bonds known to be hydrolyzed by this endopeptidase have arginine in P1 and an acidic residue in P4. P6 is often occupied by an acidic residue or by a hydroxy-amino-acid residue, the phosphorylation of which enhances cleavage.. It is inactivated via its interaction with cut2, which probably covers its active site. Cut2 degradation at anaphase, liberates it and triggers rad21 cleavage. In terms of biological role, caspase-like protease, which plays a central role in the chromosome segregation by cleaving the rad21 subunit of the cohesin complex at the onset of anaphase. During most of the cell cycle, it is inactivated by securin/cut2 protein. It is also required for pointed nuclear formation. In Schizosaccharomyces pombe (strain 972 / ATCC 24843) (Fission yeast), this protein is Separin (cut1).